Here is a 286-residue protein sequence, read N- to C-terminus: NFU1 iron-sulfur cluster scaffold homolog, mitochondrial (286 aa).

The N-terminal 66 residues, 1–66, are a transit peptide targeting the mitochondrion; that stretch reads MSKLLTNTAL…RQIQLSGARN (66 aa). Residues 182 to 250 are nifU; sequence IKELLDTRIR…IPEVESVEQV (69 aa). The [4Fe-4S] cluster site is built by C219 and C222.

The protein belongs to the NifU family.

Its subcellular location is the mitochondrion. Molecular scaffold for [Fe-S] cluster assembly of mitochondrial iron-sulfur proteins. This is NFU1 iron-sulfur cluster scaffold homolog, mitochondrial from Drosophila ananassae (Fruit fly).